The following is a 361-amino-acid chain: Rhomboid domain-containing protein 2 (361 aa).

The next 5 helical transmembrane spans lie at 19–39 (SATFFTALLSLLVSGPRLFLL), 63–83 (LVTYIFVYENPVSLLCGAIII), 100–120 (CFFTLIFTVFSAIIYLSFESV), 158–178 (FGVVVPSVLVPWLLLCASWLI), and 182–202 (SFLSNVSGLLIGLSYGLTYCY). Disordered regions lie at residues 265–287 (PSYPVTQMQHASGQKLASWPPGH) and 318–361 (PASA…VAMP). 2 stretches are compositionally biased toward polar residues: residues 267 to 276 (YPVTQMQHAS) and 318 to 328 (PASAGTSQGVQ).

This sequence belongs to the peptidase S54 family. As to quaternary structure, might form homotrimers; these trimers are only formed in retina. In terms of tissue distribution, widely expressed, including in retina and brain (at protein level), as well as in kidney, testis and ovary. Expressed in all layers of the retina, including inner segments of photoreceptor cells and ganglion cells (at protein level).

The protein localises to the golgi apparatus. The protein resides in the cis-Golgi network membrane. The protein is Rhomboid domain-containing protein 2 (Rhbdd2) of Mus musculus (Mouse).